The chain runs to 209 residues: Ribosomal RNA small subunit methyltransferase G (209 aa).

S-adenosyl-L-methionine-binding positions include Gly-71, Phe-76, 122-123, and Arg-135; that span reads AE.

It belongs to the methyltransferase superfamily. RNA methyltransferase RsmG family.

It is found in the cytoplasm. In terms of biological role, specifically methylates the N7 position of a guanine in 16S rRNA. This is Ribosomal RNA small subunit methyltransferase G from Flavobacterium johnsoniae (strain ATCC 17061 / DSM 2064 / JCM 8514 / BCRC 14874 / CCUG 350202 / NBRC 14942 / NCIMB 11054 / UW101) (Cytophaga johnsonae).